A 48-amino-acid chain; its full sequence is Large ribosomal subunit protein eL40 (48 aa).

This sequence belongs to the eukaryotic ribosomal protein eL40 family.

The protein is Large ribosomal subunit protein eL40 of Methanobrevibacter smithii (strain ATCC 35061 / DSM 861 / OCM 144 / PS).